The following is a 137-amino-acid chain: Protein MGF 110-7L (137 aa).

Positions 1-20 (MLVIILGIIGLLASSNLVSS) are cleaved as a signal peptide. 3 N-linked (GlcNAc...) asparagine; by host glycosylation sites follow: Asn69, Asn70, and Asn105.

The protein belongs to the asfivirus MGF 110 family.

In terms of biological role, plays a role in virus cell tropism, and may be required for efficient virus replication in macrophages. The chain is Protein MGF 110-7L from African swine fever virus (isolate Warthog/Namibia/Wart80/1980) (ASFV).